The chain runs to 1193 residues: Tubulin monoglutamylase TTLL4 (1193 aa).

Disordered regions lie at residues 1–37 and 468–535; these read MASAGTEHYSIGLRRGNSFKQRHPSGTVSASPSEKPS and VHLD…CSSL. Over residues 24-34 the composition is skewed to polar residues; it reads PSGTVSASPSE. The segment covering 472 to 482 has biased composition (basic and acidic residues); it reads QPGKEPEEAKD. The segment covering 502-515 has biased composition (acidic residues); sequence EPEDTEDELGDGLE. One can recognise a TTL domain in the interval 599 to 942; that stretch reads RRLLRWKMST…VLPNMEDIIS (344 aa). Ser686 is subject to Phosphoserine. ATP is bound by residues Lys716, 722 to 723, 744 to 747, and 757 to 759; these read RG, QRYL, and KFD. Position 722 (Arg722) interacts with a protein. L-glutamate is bound at residue Arg783. An ATP-binding site is contributed by 804–805; the sequence is TN. Residues Tyr806, Ser807, and Lys828 each contribute to the L-glutamate site. Residues Asp888, Glu901, and Asn903 each contribute to the Mg(2+) site. A c-MTBD region region spans residues 913–1027; the sequence is PLDISIKGQM…RGQFERIFPS (115 aa). Residue Lys919 coordinates L-glutamate. Low complexity predominate over residues 943 to 960; it reads SSSSPSSSSGSSTSLPSS. 2 disordered regions span residues 943–966 and 1092–1193; these read SSSSPSSSSGSSTSLPSSPRDKCQ and MTTS…AVSS. Polar residues-rich tracts occupy residues 1092 to 1102 and 1131 to 1153; these read MTTSKGDGTPN and SQAGLSPISRKTLSSRSNENTSK. Residues 1168 to 1182 show a composition bias toward low complexity; sequence SGQSSRLSAASASQS. Over residues 1183-1193 the composition is skewed to polar residues; it reads VTDSRLTAVSS.

The protein belongs to the tubulin--tyrosine ligase family. It depends on Mg(2+) as a cofactor. As to expression, highly expressed in testis. Expressed in brain, heart, kidney, liver, lung, muscle and spleen. In the brain, expressed in ependymal cilia, the cortex and the striatum. Expressed in blastomere.

The protein localises to the cytoplasm. It is found in the cell projection. It localises to the cilium. The protein resides in the cytoskeleton. Its subcellular location is the cilium basal body. It carries out the reaction L-glutamyl-[protein] + L-glutamate + ATP = gamma-L-glutamyl-L-glutamyl-[protein] + ADP + phosphate + H(+). Monoglutamylase which modifies both tubulin and non-tubulin proteins, adding a single glutamate on the gamma-carboxyl group of specific glutamate residues of target proteins. Involved in the side-chain initiation step of the polyglutamylation reaction but not in the elongation step. Preferentially modifies beta-tail tubulin over the alpha-tubulin. Monoglutamylates nucleosome assembly proteins NAP1L1 and NAP1L4. Monoglutamylates nucleotidyltransferase CGAS, leading to inhibition of CGAS catalytic activity, thereby preventing antiviral defense function. Involved in KLF4 glutamylation which impedes its ubiquitination, thereby leading to somatic cell reprogramming, pluripotency maintenance and embryogenesis. The chain is Tubulin monoglutamylase TTLL4 from Mus musculus (Mouse).